Consider the following 498-residue polypeptide: Hexokinase-1 (498 aa).

One can recognise a Hexokinase domain in the interval 39–492 (AAAQRVVAEL…SGLGAALVAA (454 aa)). The tract at residues 95–233 (TGGEEGSYYA…GLDMRVSALI (139 aa)) is hexokinase small subdomain. ADP contacts are provided by glycine 109, threonine 110, and asparagine 111. D-glucose-binding residues include threonine 199, lysine 200, asparagine 234, and aspartate 235. The interval 234–481 (NDTVGTLAAG…ERVVVKLASD (248 aa)) is hexokinase large subdomain. Residue threonine 258 participates in ADP binding. Positions 261, 290, and 321 each coordinate D-glucose. Glycine 446 is a binding site for ADP.

Belongs to the hexokinase family. Highly expressed in senescent leaves.

The catalysed reaction is a D-hexose + ATP = a D-hexose 6-phosphate + ADP + H(+). The enzyme catalyses D-fructose + ATP = D-fructose 6-phosphate + ADP + H(+). It catalyses the reaction D-glucose + ATP = D-glucose 6-phosphate + ADP + H(+). Its pathway is carbohydrate metabolism; hexose metabolism. It participates in carbohydrate degradation; glycolysis; D-glyceraldehyde 3-phosphate and glycerone phosphate from D-glucose: step 1/4. Functionally, fructose and glucose phosphorylating enzyme. Acts as a positive regulator of leaf senescence by mediating glucose accumulation and inducing an increase in reactive oxygen species (ROS). The chain is Hexokinase-1 (HXK1) from Oryza sativa subsp. japonica (Rice).